Reading from the N-terminus, the 424-residue chain is Adenylosuccinate synthetase (424 aa).

Residues 12-18 (GDEGKGK) and 40-42 (GHT) each bind GTP. Residue Asp13 is the Proton acceptor of the active site. Mg(2+)-binding residues include Asp13 and Gly40. Residues 13–16 (DEGK), 38–41 (NAGH), Thr128, Arg142, Gln223, Thr238, and Arg302 each bind IMP. His41 acts as the Proton donor in catalysis. Substrate is bound at residue 298 to 304 (TTTGRPR). Residues Arg304, 330–332 (HVD), and 412–414 (GVG) contribute to the GTP site.

Belongs to the adenylosuccinate synthetase family. In terms of assembly, homodimer. Mg(2+) serves as cofactor.

The protein localises to the cytoplasm. It carries out the reaction IMP + L-aspartate + GTP = N(6)-(1,2-dicarboxyethyl)-AMP + GDP + phosphate + 2 H(+). The protein operates within purine metabolism; AMP biosynthesis via de novo pathway; AMP from IMP: step 1/2. In terms of biological role, plays an important role in the de novo pathway of purine nucleotide biosynthesis. Catalyzes the first committed step in the biosynthesis of AMP from IMP. In Acetivibrio thermocellus (strain ATCC 27405 / DSM 1237 / JCM 9322 / NBRC 103400 / NCIMB 10682 / NRRL B-4536 / VPI 7372) (Clostridium thermocellum), this protein is Adenylosuccinate synthetase.